The primary structure comprises 764 residues: Tyrosine-protein phosphatase corkscrew (764 aa).

The SH2 domain occupies 1–95; it reads WFHGNLSGKE…GTVVHLRQPF (95 aa). The 406-residue stretch at 117–522 folds into the Tyrosine-protein phosphatase domain; it reads FWEEFESLQQ…KFVYYAVQHY (406 aa). Residues 174-325 form a PTPase insert (Cys/Ser-rich) region; sequence IRLPTDGDLY…LNGEGNQFKT (152 aa). Residues 246–273 form a disordered region; the sequence is SKHKRSESMSASANASAAGTGPGTPTAA. Positions 255 to 273 are enriched in low complexity; it reads SASANASAAGTGPGTPTAA. Residues D422, 460-466, and Q507 contribute to the substrate site; that span reads CSAGIGR. The active-site Phosphocysteine intermediate is C460. The tract at residues 599-666 is disordered; that stretch reads AAKLQPPLPP…NANGNGNILG (68 aa). The segment covering 612 to 666 has biased composition (low complexity); the sequence is SNNNNSSGNSGSYCNSSSSTSTAQHNGVVSSSNNCSSGSGSANSSNANGNGNILG.

Belongs to the protein-tyrosine phosphatase family. Non-receptor class subfamily.

The protein localises to the cytoplasm. It catalyses the reaction O-phospho-L-tyrosyl-[protein] + H2O = L-tyrosyl-[protein] + phosphate. Functionally, required in all receptor tyrosine kinase signaling pathways. Functions downstream of the receptor tyrosine kinase torso, acting in concert with D-Raf via tailless. Also functions downstream of Egfr (epidermal growth factor receptor) and btl (fibroblast growth factor receptor). The SH2 domain suggests that csw effects its role by mediating heteromeric protein interactions. Maternally required for normal determination of cell fates at the termini of the embryo. Required for cell fate specification of the ventral ectoderm, in the developing embryonic CNS and for embryonic tracheal cell migration. Functions during imaginal development for proper formation of adult structures such as eyes, aristae, L5 wing vein and the tarsal claw. This is Tyrosine-protein phosphatase corkscrew (csw) from Drosophila virilis (Fruit fly).